A 506-amino-acid chain; its full sequence is Glycine--tRNA ligase (506 aa).

Arg-99 and Glu-189 together coordinate substrate. ATP contacts are provided by residues 221-223 (RNE), 231-236 (FRVREL), 306-307 (EI), and 365-368 (GVDR). 236-240 (LEQME) provides a ligand contact to substrate. 361–365 (EPSAG) is a binding site for substrate.

It belongs to the class-II aminoacyl-tRNA synthetase family. Homodimer.

It localises to the cytoplasm. It catalyses the reaction tRNA(Gly) + glycine + ATP = glycyl-tRNA(Gly) + AMP + diphosphate. Catalyzes the attachment of glycine to tRNA(Gly). The chain is Glycine--tRNA ligase from Deinococcus radiodurans (strain ATCC 13939 / DSM 20539 / JCM 16871 / CCUG 27074 / LMG 4051 / NBRC 15346 / NCIMB 9279 / VKM B-1422 / R1).